The chain runs to 267 residues: Undecaprenyl-diphosphatase (267 aa).

8 helical membrane-spanning segments follow: residues isoleucine 4 to serine 24, asparagine 41 to phenylalanine 61, isoleucine 84 to phenylalanine 104, tyrosine 116 to leucine 136, cysteine 160 to leucine 180, tyrosine 185 to leucine 205, glutamate 216 to glycine 236, and threonine 246 to cysteine 266.

Belongs to the UppP family.

The protein localises to the cell membrane. It catalyses the reaction di-trans,octa-cis-undecaprenyl diphosphate + H2O = di-trans,octa-cis-undecaprenyl phosphate + phosphate + H(+). Catalyzes the dephosphorylation of undecaprenyl diphosphate (UPP). Confers resistance to bacitracin. This chain is Undecaprenyl-diphosphatase, found in Wigglesworthia glossinidia brevipalpis.